The primary structure comprises 343 residues: Cytoplasmic tRNA 2-thiolation protein 1 (343 aa).

This sequence belongs to the TtcA family. CTU1/NCS6/ATPBD3 subfamily.

The protein localises to the cytoplasm. It participates in tRNA modification; 5-methoxycarbonylmethyl-2-thiouridine-tRNA biosynthesis. In terms of biological role, plays a central role in 2-thiolation of mcm(5)S(2)U at tRNA wobble positions of tRNA(Lys), tRNA(Glu) and tRNA(Gln). Directly binds tRNAs and probably acts by catalyzing adenylation of tRNAs, an intermediate required for 2-thiolation. It is unclear whether it acts as a sulfurtransferase that transfers sulfur from thiocarboxylated URM1 onto the uridine of tRNAs at wobble position. The chain is Cytoplasmic tRNA 2-thiolation protein 1 from Drosophila pseudoobscura pseudoobscura (Fruit fly).